The primary structure comprises 464 residues: Chromosomal replication initiator protein DnaA (464 aa).

The tract at residues 1 to 90 (MNNDNTEVLE…KYWQDEDQSI (90 aa)) is domain I, interacts with DnaA modulators. The interval 90-126 (ICSVDICVVSNQDPNLLVDIKDRVDRGIKGNCDNVSS) is domain II. Positions 127–345 (PLDPRFTFDN…GALNKVVAHS (219 aa)) are domain III, AAA+ region. ATP is bound by residues glycine 173, glycine 175, lysine 176, and threonine 177. Residues 346-464 (SLVGCSITLD…DINLLNRMLR (119 aa)) form a domain IV, binds dsDNA region.

Belongs to the DnaA family. In terms of assembly, oligomerizes as a right-handed, spiral filament on DNA at oriC.

The protein resides in the cytoplasm. Plays an essential role in the initiation and regulation of chromosomal replication. ATP-DnaA binds to the origin of replication (oriC) to initiate formation of the DNA replication initiation complex once per cell cycle. Binds the DnaA box (a 9 base pair repeat at the origin) and separates the double-stranded (ds)DNA. Forms a right-handed helical filament on oriC DNA; dsDNA binds to the exterior of the filament while single-stranded (ss)DNA is stabiized in the filament's interior. The ATP-DnaA-oriC complex binds and stabilizes one strand of the AT-rich DNA unwinding element (DUE), permitting loading of DNA polymerase. After initiation quickly degrades to an ADP-DnaA complex that is not apt for DNA replication. Binds acidic phospholipids. The protein is Chromosomal replication initiator protein DnaA of Ehrlichia ruminantium (strain Gardel).